A 115-amino-acid chain; its full sequence is Dolichyl-diphosphooligosaccharide--protein glycosyltransferase subunit DAD1 (115 aa).

Residues 1-31 lie on the Cytoplasmic side of the membrane; that stretch reads MVKSTSKDAQDLFRSLRSAYSATPTNLKIID. A helical membrane pass occupies residues 32–52; it reads LYVVFAVFTALIQVVYMALVG. The Lumenal segment spans residues 53 to 55; it reads SFP. A helical transmembrane segment spans residues 56–76; it reads FNSFLSGVLSCIGTAVLAVCL. The Cytoplasmic portion of the chain corresponds to 77-94; that stretch reads RIQVNKENKEFKDLAPER. A helical membrane pass occupies residues 95-115; sequence AFADFVLCNLVLHLVIINFLG.

The protein belongs to the DAD/OST2 family. As to quaternary structure, component of the oligosaccharyltransferase (OST) complex. As to expression, ubiquitous.

The protein resides in the endoplasmic reticulum membrane. It participates in protein modification; protein glycosylation. Its function is as follows. Subunit of the oligosaccharyl transferase (OST) complex that catalyzes the initial transfer of a defined glycan (Glc(3)Man(9)GlcNAc(2) in eukaryotes) from the lipid carrier dolichol-pyrophosphate to an asparagine residue within an Asn-X-Ser/Thr consensus motif in nascent polypeptide chains, the first step in protein N-glycosylation. N-glycosylation occurs cotranslationally and the complex associates with the Sec61 complex at the channel-forming translocon complex that mediates protein translocation across the endoplasmic reticulum (ER). All subunits are required for a maximal enzyme activity. This chain is Dolichyl-diphosphooligosaccharide--protein glycosyltransferase subunit DAD1 (DAD1), found in Arabidopsis thaliana (Mouse-ear cress).